Reading from the N-terminus, the 41-residue chain is Large ribosomal subunit protein bL36 (41 aa).

This sequence belongs to the bacterial ribosomal protein bL36 family.

This Novosphingobium aromaticivorans (strain ATCC 700278 / DSM 12444 / CCUG 56034 / CIP 105152 / NBRC 16084 / F199) protein is Large ribosomal subunit protein bL36.